A 106-amino-acid chain; its full sequence is Violacin-A (106 aa).

The N-terminal stretch at 1 to 29 (MDAQKMKMVIGLVLVATTAFALMIPAASA) is a signal peptide. A propeptide spanning residues 30 to 79 (VDDFITRRAYDNLVKSGAIKDIPVMAKTIISNPVLEEGMLTYYTNKKLGD) is cleaved from the precursor. Intrachain disulfides connect Cys-84–Cys-98, Cys-88–Cys-100, and Cys-93–Cys-105.

The protein belongs to the cyclotide family. Moebius subfamily. In terms of processing, violacin-A is not a cyclic peptide.

Its function is as follows. Probably participates in a plant defense mechanism. Has low hemolytic activity. The chain is Violacin-A from Viola odorata (Sweet violet).